Reading from the N-terminus, the 259-residue chain is Dihydroorotate dehydrogenase B (NAD(+)), electron transfer subunit (259 aa).

The 101-residue stretch at 3 to 103 (KKQGRLTIVK…LGPLGQGFPL (101 aa)) folds into the FAD-binding FR-type domain. FAD-binding positions include 54-57 (RPIS), 71-73 (IYR), and 78-79 (GT). 4 residues coordinate [2Fe-2S] cluster: C222, C227, C230, and C246.

The protein belongs to the PyrK family. Heterotetramer of 2 PyrK and 2 PyrD type B subunits. [2Fe-2S] cluster is required as a cofactor. Requires FAD as cofactor.

It participates in pyrimidine metabolism; UMP biosynthesis via de novo pathway; orotate from (S)-dihydroorotate (NAD(+) route): step 1/1. Functionally, responsible for channeling the electrons from the oxidation of dihydroorotate from the FMN redox center in the PyrD type B subunit to the ultimate electron acceptor NAD(+). This chain is Dihydroorotate dehydrogenase B (NAD(+)), electron transfer subunit, found in Shouchella clausii (strain KSM-K16) (Alkalihalobacillus clausii).